The chain runs to 594 residues: UvrABC system protein C (594 aa).

Positions 13–99 (HSSGVYQYFD…IKQLKPKYNI (87 aa)) constitute a GIY-YIG domain. The region spanning 205–240 (DKLIKELELKMERLSNNLRFEEALIYRDRIAKIQKI) is the UVR domain.

This sequence belongs to the UvrC family. As to quaternary structure, interacts with UvrB in an incision complex.

It localises to the cytoplasm. The UvrABC repair system catalyzes the recognition and processing of DNA lesions. UvrC both incises the 5' and 3' sides of the lesion. The N-terminal half is responsible for the 3' incision and the C-terminal half is responsible for the 5' incision. In Helicobacter pylori (strain HPAG1), this protein is UvrABC system protein C.